A 526-amino-acid polypeptide reads, in one-letter code: MKTKLMITIFSCLLLWSMLLLLSFSNIFKHQLLGATINVGSKDSVKPRDRLLGGLLTADFDEDSCLSRYQSSLYRKPSPYRTSEYLISKLRNYEMLHKRCGPGTDAYKRATEKLGHDHENVGDSSDGECKYIVWVAVYGLGNRILTLASVFLYALLTERIILVDQRKDISDLFCEPFPGTSWLLPLDFPLMGQIDSFNREYSHCYGTMLKNHTINSTTIPSHLYLHLLHDYRDQDKMFFCQKDQSLVDKVPWLVVKSNLYFIPSLWLNPSFQTELIKLFPQKDTVFYHLARYLFHPTNQVWGMVTRSYNAYLSRADEILGIQVRVFSRQTKYFQHVMDQIVACTQREKLLPEFAAQEEAQVTNTSNPSKLKAVLVTSLNPEYSNNLKKMYWEHPTTTGDIVEVYQPSRERFQQTDKKLHDQKALAEMYLLSLTDKLVTSALSTFGYVAQGLGGLKPWILYTPKKFKSPNPPCGRVISMEPCFLTPPVHGCEAKKGINTAKIVPFVRHCEDLRHYGLKLVDDTKNEL.

Topologically, residues M1–K4 are cytoplasmic. Residues L5–S25 form a helical; Signal-anchor for type II membrane protein membrane-spanning segment. Over N26–L526 the chain is Lumenal. N-linked (GlcNAc...) asparagine glycosylation is found at N211, N215, and N363.

Belongs to the glycosyltransferase 37 family. Expressed in roots, leaves, stems and seedlings.

It localises to the golgi apparatus. Its subcellular location is the golgi stack membrane. The protein operates within protein modification; protein glycosylation. Its function is as follows. May be involved in cell wall biosynthesis. May act as a fucosyltransferase. This chain is Probable fucosyltransferase 7 (FUT7), found in Arabidopsis thaliana (Mouse-ear cress).